The following is a 297-amino-acid chain: 4-hydroxy-tetrahydrodipicolinate synthase (297 aa).

Residue T55 participates in pyruvate binding. Y144 (proton donor/acceptor) is an active-site residue. K172 serves as the catalytic Schiff-base intermediate with substrate. Residue I213 coordinates pyruvate.

The protein belongs to the DapA family. In terms of assembly, homotetramer; dimer of dimers.

It is found in the cytoplasm. The catalysed reaction is L-aspartate 4-semialdehyde + pyruvate = (2S,4S)-4-hydroxy-2,3,4,5-tetrahydrodipicolinate + H2O + H(+). Its pathway is amino-acid biosynthesis; L-lysine biosynthesis via DAP pathway; (S)-tetrahydrodipicolinate from L-aspartate: step 3/4. Catalyzes the condensation of (S)-aspartate-beta-semialdehyde [(S)-ASA] and pyruvate to 4-hydroxy-tetrahydrodipicolinate (HTPA). This is 4-hydroxy-tetrahydrodipicolinate synthase from Lactococcus lactis subsp. lactis (strain IL1403) (Streptococcus lactis).